The primary structure comprises 285 residues: CCR4-NOT transcription complex subunit 7 (285 aa).

The a divalent metal cation site is built by D40, E42, D161, D230, and E278.

It belongs to the CAF1 family. Component of the CCR4-NOT complex. Requires Mn(2+) as cofactor. It depends on Mg(2+) as a cofactor. Co(2+) is required as a cofactor.

It is found in the nucleus. The protein localises to the cytoplasm. The enzyme catalyses Exonucleolytic cleavage of poly(A) to 5'-AMP.. Has 3'-5' poly(A) exoribonuclease activity for synthetic poly(A) RNA substrate. Catalytic component of the CCR4-NOT complex which is one of the major cellular mRNA deadenylases and is linked to various cellular processes including bulk mRNA degradation, miRNA-mediated repression, translational repression during translational initiation and general transcription regulation. During miRNA-mediated repression the complex also seems to act as translational repressor during translational initiation. Additional complex functions may be a consequence of its influence on mRNA expression. In Xenopus laevis (African clawed frog), this protein is CCR4-NOT transcription complex subunit 7 (cnot7).